The chain runs to 285 residues: Nucleotide-binding protein FMG_1084 (285 aa).

Residue 8 to 15 (GMSGAGKS) participates in ATP binding. 59–62 (DIRG) contacts GTP.

The protein belongs to the RapZ-like family.

Functionally, displays ATPase and GTPase activities. The sequence is that of Nucleotide-binding protein FMG_1084 from Finegoldia magna (strain ATCC 29328 / DSM 20472 / WAL 2508) (Peptostreptococcus magnus).